A 442-amino-acid chain; its full sequence is uncharacterized protein (442 aa).

[4Fe-4S] cluster-binding residues include C43, C49, C52, and C130. Residues Q273, Y302, E323, and D372 each coordinate S-adenosyl-L-methionine. C399 acts as the Nucleophile in catalysis.

It belongs to the class I-like SAM-binding methyltransferase superfamily. RNA M5U methyltransferase family.

This is an uncharacterized protein from Protochlamydia amoebophila (strain UWE25).